A 692-amino-acid polypeptide reads, in one-letter code: Polyribonucleotide nucleotidyltransferase (692 aa).

Positions 484 and 490 each coordinate Mg(2+). The KH domain maps to 551–614 (PKYFIHKISQ…ALVERVKSIT (64 aa)). Residues 620–688 (GAVYTGKVKT…NRGRIRLSRK (69 aa)) form the S1 motif domain.

The protein belongs to the polyribonucleotide nucleotidyltransferase family. Requires Mg(2+) as cofactor.

The protein resides in the cytoplasm. The catalysed reaction is RNA(n+1) + phosphate = RNA(n) + a ribonucleoside 5'-diphosphate. Its function is as follows. Involved in mRNA degradation. Catalyzes the phosphorolysis of single-stranded polyribonucleotides processively in the 3'- to 5'-direction. The protein is Polyribonucleotide nucleotidyltransferase of Desulfotalea psychrophila (strain LSv54 / DSM 12343).